Reading from the N-terminus, the 160-residue chain is Large ribosomal subunit protein uL16 (160 aa).

Residues 138–160 form a disordered region; sequence KNLEAPSQEKTKNSKKSQEEVKQ.

The protein belongs to the universal ribosomal protein uL16 family. In terms of assembly, part of the 50S ribosomal subunit.

Its function is as follows. Binds 23S rRNA and is also seen to make contacts with the A and possibly P site tRNAs. In Prochlorococcus marinus (strain MIT 9215), this protein is Large ribosomal subunit protein uL16.